Consider the following 648-residue polypeptide: Spastin (648 aa).

Over 1–40 (MASTVALLRDSSDDRENFDDGETDCVQVGRKRKLTVFFYP) the chain is Cytoplasmic. The helical intramembrane region spans 41 to 61 (LLLVFWLLRWVFYQFFLVLCF). Topologically, residues 62–648 (VCRGFVPRRH…WNREFGDITV (587 aa)) are cytoplasmic. The MIT domain maps to 99 to 174 (HKKAFDFISK…EMARDRLDFL (76 aa)). A disordered region spans residues 188 to 346 (PWHGGVAPAQ…SQRSLLSSRV (159 aa)). Low complexity predominate over residues 247–266 (TGVTLRRQQQQQLGGVSTVS). Residue 414-421 (GPPGNGKT) coordinates ATP.

The protein belongs to the AAA ATPase family. Spastin subfamily. In terms of assembly, homohexamer. The homohexamer is stabilized by ATP-binding. The homohexamer may adopt a ring conformation through which microtubules pass prior to being severed. Interacts with microtubules.

Its subcellular location is the membrane. It is found in the cytoplasm. It localises to the cytoskeleton. The protein localises to the microtubule organizing center. The protein resides in the centrosome. It carries out the reaction n ATP + n H2O + a microtubule = n ADP + n phosphate + (n+1) alpha/beta tubulin heterodimers.. In terms of biological role, ATP-dependent microtubule severing protein. Microtubule severing may promote reorganization of cellular microtubule arrays and the release of microtubules from the microtubule organizing center following nucleation. This chain is Spastin (spas), found in Ixodes scapularis (Black-legged tick).